Reading from the N-terminus, the 457-residue chain is tRNA modification GTPase MnmE (457 aa).

Residues Arg25, Glu87, and Arg126 each coordinate (6S)-5-formyl-5,6,7,8-tetrahydrofolate. Residues 223–377 enclose the TrmE-type G domain; sequence GISTAIIGRP…IEERINQLFF (155 aa). K(+) is bound at residue Asn233. Residues 233–238, 252–258, and 277–280 each bind GTP; these read NVGKSS, TDIEGTT, and DTAG. Mg(2+) is bound at residue Ser237. Thr252, Ile254, and Thr257 together coordinate K(+). Residue Thr258 coordinates Mg(2+). Residue Lys457 participates in (6S)-5-formyl-5,6,7,8-tetrahydrofolate binding.

The protein belongs to the TRAFAC class TrmE-Era-EngA-EngB-Septin-like GTPase superfamily. TrmE GTPase family. As to quaternary structure, homodimer. Heterotetramer of two MnmE and two MnmG subunits. Requires K(+) as cofactor.

It localises to the cytoplasm. Exhibits a very high intrinsic GTPase hydrolysis rate. Involved in the addition of a carboxymethylaminomethyl (cmnm) group at the wobble position (U34) of certain tRNAs, forming tRNA-cmnm(5)s(2)U34. This is tRNA modification GTPase MnmE from Streptococcus sanguinis (strain SK36).